The primary structure comprises 357 residues: 3-isopropylmalate dehydrogenase (357 aa).

The substrate site is built by arginine 97, arginine 107, arginine 135, and aspartate 224. 3 residues coordinate Mg(2+): aspartate 224, aspartate 248, and aspartate 252. 282-294 is an NAD(+) binding site; the sequence is GSAPDIAGQDKAN.

Belongs to the isocitrate and isopropylmalate dehydrogenases family. LeuB type 1 subfamily. In terms of assembly, homodimer. Mg(2+) serves as cofactor. Requires Mn(2+) as cofactor.

The protein localises to the cytoplasm. It catalyses the reaction (2R,3S)-3-isopropylmalate + NAD(+) = 4-methyl-2-oxopentanoate + CO2 + NADH. It functions in the pathway amino-acid biosynthesis; L-leucine biosynthesis; L-leucine from 3-methyl-2-oxobutanoate: step 3/4. In terms of biological role, catalyzes the oxidation of 3-carboxy-2-hydroxy-4-methylpentanoate (3-isopropylmalate) to 3-carboxy-4-methyl-2-oxopentanoate. The product decarboxylates to 4-methyl-2 oxopentanoate. This Synechococcus sp. (strain CC9605) protein is 3-isopropylmalate dehydrogenase.